The sequence spans 399 residues: Glutathione-independent formaldehyde dehydrogenase (399 aa).

Cys-47 is a binding site for Zn(2+). 3 residues coordinate NAD(+): Gly-48, Ser-49, and His-52. The Zn(2+) site is built by His-68, Cys-98, Cys-101, Cys-104, Cys-112, and Asp-170. The NAD(+) site is built by Val-198, Asp-218, Arg-223, Val-263, Arg-268, His-270, Pro-300, Leu-302, Gly-337, and Thr-339.

It belongs to the zinc-containing alcohol dehydrogenase family. As to quaternary structure, homotetramer. Zn(2+) is required as a cofactor.

It catalyses the reaction formaldehyde + NAD(+) + H2O = formate + NADH + 2 H(+). It carries out the reaction acetaldehyde + NAD(+) + H2O = acetate + NADH + 2 H(+). The enzyme catalyses 2 formaldehyde + H2O = methanol + formate + H(+). Inactivated by bipyridine and p-chloromercuribenzoate. Dehydrogenase that catalyzes the NAD(+)-dependent oxidation of formaldehyde and acetaldehyde, and, to a lesser extent, long-chain alcohols, but is inactive against propionaldehyde, butyraldehyde, methanol and ethanol. Can also catalyze the dismutation of a wide range of aldehydes such as formaldehyde. This Pseudomonas putida (Arthrobacter siderocapsulatus) protein is Glutathione-independent formaldehyde dehydrogenase.